Consider the following 280-residue polypeptide: Ataxin-3 homolog (280 aa).

A Josephin domain is found at 7-187; that stretch reads GGMLYHEVQE…QECPMSSSSE (181 aa). Cys20 serves as the catalytic Nucleophile. Residue His126 is the Proton acceptor of the active site. Residue Asp141 is part of the active site. 2 stretches are compositionally biased toward polar residues: residues 183 to 194 and 221 to 232; these read SSSSEASNSFGQ and DNVNQQRRNQAL. A disordered region spans residues 183-240; it reads SSSSEASNSFGQWLSPEDAERIRKNTSSGSSARNKRSNDNVNQQRRNQALSREEVQAF. Residues 243 to 262 enclose the UIM domain; it reads MEDDDLKAAIAASLLDASAA.

The protein localises to the nucleus. It catalyses the reaction Thiol-dependent hydrolysis of ester, thioester, amide, peptide and isopeptide bonds formed by the C-terminal Gly of ubiquitin (a 76-residue protein attached to proteins as an intracellular targeting signal).. Its function is as follows. Interacts with key regulators of transcription and represses transcription. Acts as a histone-binding protein that regulates transcription. Acts as a deubiquitinating enzyme. The polypeptide is Ataxin-3 homolog (Arabidopsis thaliana (Mouse-ear cress)).